We begin with the raw amino-acid sequence, 574 residues long: Ribonuclease Y (574 aa).

Residues 1–21 traverse the membrane as a helical segment; that stretch reads MSLLDLVLLLLVLGLGGVLLL. Residues 264–327 form the KH domain; the sequence is AVTVVPIPSD…EIARMALEEL (64 aa). The HD domain maps to 390–483; the sequence is VLKHSIQVAH…VAAADALSAA (94 aa).

Belongs to the RNase Y family.

It is found in the cell membrane. Its function is as follows. Endoribonuclease that initiates mRNA decay. In Thermus thermophilus (strain ATCC 27634 / DSM 579 / HB8), this protein is Ribonuclease Y.